The following is a 938-amino-acid chain: Phosphoenolpyruvate carboxylase (938 aa).

Active-site residues include histidine 151 and lysine 591.

The protein belongs to the PEPCase type 1 family. Mg(2+) serves as cofactor.

The catalysed reaction is oxaloacetate + phosphate = phosphoenolpyruvate + hydrogencarbonate. Functionally, forms oxaloacetate, a four-carbon dicarboxylic acid source for the tricarboxylic acid cycle. The polypeptide is Phosphoenolpyruvate carboxylase (Roseiflexus castenholzii (strain DSM 13941 / HLO8)).